The primary structure comprises 322 residues: Putative HTH-type transcriptional regulatory protein rrnAC2519 (322 aa).

Positions 132 to 189 (LADVREDRDWSLGRLAKELGVSRRTVSKYEDGMDASVEVAAELEDLFDAPLTSPVSVL) constitute an HTH cro/C1-type domain. The H-T-H motif DNA-binding region spans 143–162 (LGRLAKELGVSRRTVSKYED).

This chain is Putative HTH-type transcriptional regulatory protein rrnAC2519, found in Haloarcula marismortui (strain ATCC 43049 / DSM 3752 / JCM 8966 / VKM B-1809) (Halobacterium marismortui).